Consider the following 182-residue polypeptide: UPF0149 protein CGSHiGG_07585 (182 aa).

It belongs to the UPF0149 family.

The chain is UPF0149 protein CGSHiGG_07585 from Haemophilus influenzae (strain PittGG).